We begin with the raw amino-acid sequence, 244 residues long: MSDTPQSPAQDSLAEHDEARPMRTVKSFVMRAGRMTEGQQRGLDLGWPKFGLELSDEVQDFDAIFGRQAPRTFEIGFGMGHSTLEMAAAAPDIDFIGVEVHKPGVGALLNGLLTQGLGNVRVYSCDALEVLRHCVADASLDRLLLFFPDPWHKKRHHKRRIVQPEFAELVRRKLKVGGVLHMATDWEPYAEHMLDVMSAAPGYRNQAEDGRFVPRPQERPVTKFERRGERLGHGVWDLKFERVD.

Over residues 1–10 the composition is skewed to polar residues; that stretch reads MSDTPQSPAQ. The segment at 1–20 is disordered; the sequence is MSDTPQSPAQDSLAEHDEAR. Residues E74, E99, D126, and D149 each coordinate S-adenosyl-L-methionine. The active site involves D149. Substrate is bound by residues K153, D185, and 222–225; that span reads TKFE.

Belongs to the class I-like SAM-binding methyltransferase superfamily. TrmB family.

The enzyme catalyses guanosine(46) in tRNA + S-adenosyl-L-methionine = N(7)-methylguanosine(46) in tRNA + S-adenosyl-L-homocysteine. The protein operates within tRNA modification; N(7)-methylguanine-tRNA biosynthesis. In terms of biological role, catalyzes the formation of N(7)-methylguanine at position 46 (m7G46) in tRNA. In Pseudomonas aeruginosa (strain ATCC 15692 / DSM 22644 / CIP 104116 / JCM 14847 / LMG 12228 / 1C / PRS 101 / PAO1), this protein is tRNA (guanine-N(7)-)-methyltransferase.